The following is a 227-amino-acid chain: ATP phosphoribosyltransferase (227 aa).

This sequence belongs to the ATP phosphoribosyltransferase family. Short subfamily. Heteromultimer composed of HisG and HisZ subunits.

The protein localises to the cytoplasm. The enzyme catalyses 1-(5-phospho-beta-D-ribosyl)-ATP + diphosphate = 5-phospho-alpha-D-ribose 1-diphosphate + ATP. It participates in amino-acid biosynthesis; L-histidine biosynthesis; L-histidine from 5-phospho-alpha-D-ribose 1-diphosphate: step 1/9. Functionally, catalyzes the condensation of ATP and 5-phosphoribose 1-diphosphate to form N'-(5'-phosphoribosyl)-ATP (PR-ATP). Has a crucial role in the pathway because the rate of histidine biosynthesis seems to be controlled primarily by regulation of HisG enzymatic activity. The protein is ATP phosphoribosyltransferase of Bordetella avium (strain 197N).